The primary structure comprises 152 residues: Protein-export protein SecB (152 aa).

This sequence belongs to the SecB family. In terms of assembly, homotetramer, a dimer of dimers. One homotetramer interacts with 1 SecA dimer.

The protein localises to the cytoplasm. One of the proteins required for the normal export of preproteins out of the cell cytoplasm. It is a molecular chaperone that binds to a subset of precursor proteins, maintaining them in a translocation-competent state. It also specifically binds to its receptor SecA. In Thiobacillus denitrificans (strain ATCC 25259 / T1), this protein is Protein-export protein SecB.